The following is a 225-amino-acid chain: ATP-dependent dethiobiotin synthetase BioD (225 aa).

Position 12-17 (12-17 (GVGKTV)) interacts with ATP. Mg(2+) is bound at residue T16. K37 is a catalytic residue. T41 is a substrate binding site. Residues D49, 108–111 (EGAG), and 197–199 (PAG) contribute to the ATP site. Positions 49 and 108 each coordinate Mg(2+).

The protein belongs to the dethiobiotin synthetase family. Homodimer. Requires Mg(2+) as cofactor.

It is found in the cytoplasm. It carries out the reaction (7R,8S)-7,8-diammoniononanoate + CO2 + ATP = (4R,5S)-dethiobiotin + ADP + phosphate + 3 H(+). It participates in cofactor biosynthesis; biotin biosynthesis; biotin from 7,8-diaminononanoate: step 1/2. Catalyzes a mechanistically unusual reaction, the ATP-dependent insertion of CO2 between the N7 and N8 nitrogen atoms of 7,8-diaminopelargonic acid (DAPA, also called 7,8-diammoniononanoate) to form a ureido ring. The polypeptide is ATP-dependent dethiobiotin synthetase BioD (Mycolicibacterium smegmatis (strain ATCC 700084 / mc(2)155) (Mycobacterium smegmatis)).